We begin with the raw amino-acid sequence, 231 residues long: Small ribosomal subunit protein uS3 (231 aa).

The KH type-2 domain occupies 39–107 (IRELLHKELK…DVVLNIVEIR (69 aa)).

The protein belongs to the universal ribosomal protein uS3 family. As to quaternary structure, part of the 30S ribosomal subunit. Forms a tight complex with proteins S10 and S14.

Binds the lower part of the 30S subunit head. Binds mRNA in the 70S ribosome, positioning it for translation. This is Small ribosomal subunit protein uS3 from Nitrobacter winogradskyi (strain ATCC 25391 / DSM 10237 / CIP 104748 / NCIMB 11846 / Nb-255).